A 115-amino-acid polypeptide reads, in one-letter code: Protein translation factor SUI1 homolog (115 aa).

It belongs to the SUI1 family.

In terms of biological role, probably involved in translation. This chain is Protein translation factor SUI1 homolog, found in Sporobolus stapfianus (Ressurection grass).